The primary structure comprises 564 residues: Copine-8 (564 aa).

C2 domains are found at residues 1 to 133 (MDSR…RLEK) and 142 to 265 (KCGT…FNVY). Ca(2+)-binding residues include aspartate 39, aspartate 45, aspartate 99, aspartate 101, serine 104, lysine 109, aspartate 111, aspartate 173, aspartate 179, aspartate 235, aspartate 237, and aspartate 243. Serine 260 is subject to Phosphoserine. The 202-residue stretch at 309-510 (NFTVAIDFTA…VQFVPFRDYI (202 aa)) folds into the VWFA domain.

Belongs to the copine family. Requires Ca(2+) as cofactor.

Probable calcium-dependent phospholipid-binding protein that may play a role in calcium-mediated intracellular processes. The sequence is that of Copine-8 from Homo sapiens (Human).